The chain runs to 222 residues: CEACAM1-like protein UL7 (222 aa).

N-linked (GlcNAc...) asparagine; by host glycans are attached at residues Asn-50, Asn-56, Asn-60, Asn-71, Asn-105, Asn-109, Asn-125, Asn-132, Asn-147, Asn-164, Asn-168, and Asn-189. Residues 193–213 traverse the membrane as a helical segment; the sequence is LALVGVIVFIALIVVCIMGWW.

Belongs to the RL11 family. Interacts with host FLT3. Post-translationally, highly glycosylated.

It localises to the secreted. The protein localises to the host cell membrane. Plays a role in modulating the host immune response and affecting host cytokine production. Structurally and functionally homolog of host CEACAM1, induces endothelial cell angiogenesis. Ligands for host FLT3 receptor, activates the PI3K/AKT and MAPK/ERK pathways. In turn, triggers hematopoietic progenitor cell and monocyte differentiation leading to virus reactivation. The protein is CEACAM1-like protein UL7 (UL7) of Human cytomegalovirus (strain AD169) (HHV-5).